The primary structure comprises 766 residues: Flocculation suppression protein (766 aa).

Disordered regions lie at residues 1-52 (MSEE…HGSK), 129-181 (HDHS…PTKI), 203-247 (KRRA…SSNS), 547-619 (KPVP…SISG), and 657-766 (SVTP…KVKM). Low complexity-rich tracts occupy residues 8 to 19 (SAPAPASTPAPA) and 134 to 147 (NDAN…TNDD). The DNA-binding element occupies 64–186 (IFIHKLYQIL…NPTKIWEFKH (123 aa)). Over residues 171–181 (QEKEKSNPTKI) the composition is skewed to basic and acidic residues. Residues 208–224 (SRNNSSINSRKNSSNQN) show a composition bias toward low complexity. Serine 220 bears the Phosphoserine mark. Residues 236–247 (SSIQDPSTSSNS) show a composition bias toward polar residues. Serine 556 is modified (phosphoserine). The span at 679-699 (AVSSNLINSPMNVEHSSSLSQ) shows a compositional bias: polar residues. Over residues 708–719 (LPQPSLPTTSTT) the composition is skewed to low complexity. Position 733 is a phosphoserine (serine 733). Residues 738–750 (LLNQEDSSTSSAD) show a composition bias toward polar residues.

In the N-terminal section; belongs to the HSF family.

The protein localises to the nucleus. Its function is as follows. Involved in cell surface assembly and regulation of the gene related to flocculation (asexual cell aggregation). Mutations in SFL1 causes constitutive cell aggregation. This chain is Flocculation suppression protein (SFL1), found in Saccharomyces cerevisiae (strain ATCC 204508 / S288c) (Baker's yeast).